The following is a 309-amino-acid chain: Ornithine carbamoyltransferase (309 aa).

Carbamoyl phosphate contacts are provided by residues 57–60, glutamine 84, arginine 108, and 135–138; these read STRT and HPCQ. L-ornithine is bound by residues asparagine 166, aspartate 224, and 228–229; that span reads SM. Residues 264-265 and arginine 292 each bind carbamoyl phosphate; that span reads CL.

Belongs to the aspartate/ornithine carbamoyltransferase superfamily. OTCase family.

Its subcellular location is the cytoplasm. It catalyses the reaction carbamoyl phosphate + L-ornithine = L-citrulline + phosphate + H(+). Its pathway is amino-acid biosynthesis; L-arginine biosynthesis; L-arginine from L-ornithine and carbamoyl phosphate: step 1/3. In terms of biological role, reversibly catalyzes the transfer of the carbamoyl group from carbamoyl phosphate (CP) to the N(epsilon) atom of ornithine (ORN) to produce L-citrulline. This chain is Ornithine carbamoyltransferase, found in Paracidovorax citrulli (strain AAC00-1) (Acidovorax citrulli).